Here is a 390-residue protein sequence, read N- to C-terminus: GTPase Obg (390 aa).

Positions 1-159 (MKFVDEATIK…RELRLELLLL (159 aa)) constitute an Obg domain. The OBG-type G domain occupies 160–333 (ADVGMLGLPN…LCDELADFMD (174 aa)). GTP contacts are provided by residues 166-173 (GLPNAGKS), 191-195 (FTTLI), 213-216 (DIPG), 283-286 (NKTD), and 314-316 (AAV). The Mg(2+) site is built by serine 173 and threonine 193.

It belongs to the TRAFAC class OBG-HflX-like GTPase superfamily. OBG GTPase family. Monomer. Mg(2+) serves as cofactor.

It localises to the cytoplasm. Its function is as follows. An essential GTPase which binds GTP, GDP and possibly (p)ppGpp with moderate affinity, with high nucleotide exchange rates and a fairly low GTP hydrolysis rate. Plays a role in control of the cell cycle, stress response, ribosome biogenesis and in those bacteria that undergo differentiation, in morphogenesis control. The protein is GTPase Obg of Aliivibrio fischeri (strain MJ11) (Vibrio fischeri).